The chain runs to 50 residues: U2-ctenitoxin-Pk1a (50 aa).

Intrachain disulfides connect Cys-1/Cys-15, Cys-8/Cys-21, Cys-12/Cys-47, Cys-14/Cys-31, and Cys-23/Cys-29.

In terms of tissue distribution, expressed by the venom gland.

Its subcellular location is the secreted. Insecticidal neurotoxin that reversibly inhibits the N-methyl-D-aspartate (NMDA)-subtype of ionotropic glutamate receptor (GRIN) and inhibits inactivation of insect sodium channels (Nav). In vivo, is highly toxic to insects. The protein is U2-ctenitoxin-Pk1a of Phoneutria keyserlingi (Brazilian wandering spider).